Reading from the N-terminus, the 238-residue chain is Cysteine-rich venom protein kaouthin-2 (238 aa).

The N-terminal stretch at 1 to 19 (MIAFIVLLSLAAVLQQSSG) is a signal peptide. A propeptide spanning residues 20–25 (TVDFAS) is cleaved from the precursor. Residues 38–164 (VDKHNALRRS…SSKYLYVCQY (127 aa)) form the SCP domain. 8 disulfide bridges follow: Cys75–Cys153, Cys92–Cys165, Cys148–Cys162, Cys184–Cys191, Cys187–Cys196, Cys200–Cys233, Cys209–Cys227, and Cys218–Cys231. Residues 200–233 (CKHHNVFSNCQSLAKQNACQTEWMKSKCAASCFC) form the ShKT domain.

In terms of tissue distribution, expressed by the venom gland.

It localises to the secreted. The sequence is that of Cysteine-rich venom protein kaouthin-2 from Naja kaouthia (Monocled cobra).